A 510-amino-acid polypeptide reads, in one-letter code: MASWTSSEFLYEEVKPPGIHFLERFRRSGKLSFKQYQAMVFVLTFIAYIAFHATRKPNSIVKGTLSEQPTGHFKGADKGGWAPFDGPDGTALLGQIDLAFLSVYAVGMFVAGHLGDRLDLRTFLTIGMVGTGVCTALFGVAFWANIHAFYYFLAIQTLAGWFQSIGWPCVVAVLGNWFDKKRRGVIMGVWSAHTSLGNIIGTLIATGLLKFGWGWSFVGPALLITFLGIVVYLFLPVNPHAVEAERDGSEVDSTMRLGDTITESFLSSRTSTGFDRRAVGFLAAWKIPGVAPFAFCLFFTKLVSYTFLYWLPFYVSQTEIGGEQLSQETSGNLSTLFDVGGVVGGILAGYFSDQLDGRAITAGGFIYLTIPALFLYRIYGHVSMTINIILMFVAGLFVNGPYALITTAVAADLGTHKSLKGNARALATVTAIIDGTGSVGAAIGPVLTGYIAAISWDAVFYMLMTAALISGLLLTTLIIEEVKTLLYGSSEEDHEVAAASTSRPPIDVLI.

12 consecutive transmembrane segments (helical) span residues 31–51, 91–111, 123–143, 158–178, 185–205, 217–237, 279–299, 331–351, 355–375, 378–398, 436–456, and 459–479; these read LSFK…YIAF, ALLG…MFVA, FLTI…VAFW, LAGW…GNWF, VIMG…TLIA, FVGP…FLPV, VGFL…CLFF, GNLS…AGYF, LDGR…ALFL, IYGH…GLFV, TGSV…AISW, and VFYM…TLII.

It belongs to the major facilitator superfamily. Organophosphate:Pi antiporter (OPA) (TC 2.A.1.4) family.

The protein resides in the membrane. This is Putative glycerol-3-phosphate transporter 3 from Arabidopsis thaliana (Mouse-ear cress).